The primary structure comprises 186 residues: Ribulose bisphosphate carboxylase small subunit, chloroplastic 6 (186 aa).

The N-terminal 60 residues, 1-60 (MASSMLSNAAVATTAASRSAGAQASMVAPFTGLKSVSAFPVTRKSSNDLSTVPSNGGKVQ), are a transit peptide targeting the chloroplast.

It belongs to the RuBisCO small chain family. In terms of assembly, heterohexadecamer of 8 large and 8 small subunits.

Its subcellular location is the plastid. The protein resides in the chloroplast. RuBisCO catalyzes two reactions: the carboxylation of D-ribulose 1,5-bisphosphate, the primary event in carbon dioxide fixation, as well as the oxidative fragmentation of the pentose substrate. Both reactions occur simultaneously and in competition at the same active site. Although the small subunit is not catalytic it is essential for maximal activity. The protein is Ribulose bisphosphate carboxylase small subunit, chloroplastic 6 of Mesembryanthemum crystallinum (Common ice plant).